Reading from the N-terminus, the 304-residue chain is Probable HTH-type transcriptional regulator LgoR (304 aa).

Positions 1 to 70 (MSRSQNLRHN…VGNDYVIARK (70 aa)) constitute an HTH gntR-type domain. Residues 31 to 50 (QSALAEMYNISRTTVRHILS) constitute a DNA-binding region (H-T-H motif).

Functionally, may be a positive transcriptional regulator for lgoD and/or lgoT. Is essential for growth on L-galactonate as the sole carbon source. This is Probable HTH-type transcriptional regulator LgoR (lgoR) from Escherichia coli (strain K12).